The following is a 293-amino-acid chain: Protein orai (293 aa).

Residues 1-122 are Cytoplasmic-facing; the sequence is MPRSHDPSRV…RAQLKASSRT (122 aa). The segment at 62–81 is disordered; the sequence is STAGGGSRNGVGSKEGSVTS. Residues 123 to 141 form a helical membrane-spanning segment; that stretch reads SALLAGFAMVCLVELQYDQ. At 142 to 146 the chain is on the extracellular side; it reads STPKP. A helical membrane pass occupies residues 147–167; the sequence is LLIVLGVVTSLLVSVHLLALM. The Cytoplasmic portion of the chain corresponds to 168-198; the sequence is MSTCILPYMEATGCTQDSPHIKLKFYIDLSW. A helical membrane pass occupies residues 199 to 219; that stretch reads LFSTCIGLLLFLVEIGVIFYV. Residues 220 to 230 lie on the Extracellular side of the membrane; it reads KFTAVGYPTAG. Residues 231–251 form a helical membrane-spanning segment; it reads YITTAMLVPVGVVFVVFSYLI. The Cytoplasmic segment spans residues 252–293; that stretch reads HKNRVSHSLGRFKHKVDTMKQFLDVEANLQKSTLAPSTIRDI.

This sequence belongs to the Orai family. Expressed in gonad sheath cells, hypodermis, intestine and spermatheca. Coexpressed with stim-1.

It localises to the membrane. Ca(2+) release-activated Ca(2+)-like (CRAC-like) channel subunit which mediates Ca(2+) influx and increase in Ca(2+)-selective current by synergy with the Ca(2+) sensor, stim-1. Required for Ca(2+) and IP3-dependent contractile activity of sheath cells and the spermatheca. Affects brood size and somatic cell function. This Caenorhabditis elegans protein is Protein orai (orai-1).